Here is a 511-residue protein sequence, read N- to C-terminus: Ribose import ATP-binding protein RbsA 3 (511 aa).

2 ABC transporter domains span residues 21–257 (LEMR…VGRD) and 256–511 (RDVE…TGNA). 53–60 (GENGAGKS) is a binding site for ATP.

It belongs to the ABC transporter superfamily. Ribose importer (TC 3.A.1.2.1) family. In terms of assembly, the complex is composed of an ATP-binding protein (RbsA), two transmembrane proteins (RbsC) and a solute-binding protein (RbsB).

The protein resides in the cell inner membrane. It carries out the reaction D-ribose(out) + ATP + H2O = D-ribose(in) + ADP + phosphate + H(+). Part of the ABC transporter complex RbsABC involved in ribose import. Responsible for energy coupling to the transport system. The sequence is that of Ribose import ATP-binding protein RbsA 3 from Rhizobium etli (strain ATCC 51251 / DSM 11541 / JCM 21823 / NBRC 15573 / CFN 42).